The primary structure comprises 466 residues: 3-isopropylmalate dehydratase large subunit (466 aa).

Residues Cys-346, Cys-406, and Cys-409 each coordinate [4Fe-4S] cluster.

This sequence belongs to the aconitase/IPM isomerase family. LeuC type 1 subfamily. In terms of assembly, heterodimer of LeuC and LeuD. [4Fe-4S] cluster serves as cofactor.

It carries out the reaction (2R,3S)-3-isopropylmalate = (2S)-2-isopropylmalate. The protein operates within amino-acid biosynthesis; L-leucine biosynthesis; L-leucine from 3-methyl-2-oxobutanoate: step 2/4. Functionally, catalyzes the isomerization between 2-isopropylmalate and 3-isopropylmalate, via the formation of 2-isopropylmaleate. The protein is 3-isopropylmalate dehydratase large subunit of Alteromonas mediterranea (strain DSM 17117 / CIP 110805 / LMG 28347 / Deep ecotype).